We begin with the raw amino-acid sequence, 165 residues long: Pro-MCH (165 aa).

The signal sequence occupies residues M1 to G21. The segment at Y66–Q89 is disordered. I143 bears the Isoleucine amide mark. A disulfide bond links C153 and C162.

This sequence belongs to the MCH family. In terms of processing, pro-MCH is processed differentially in the brain and in peripheral organs producing two neuropeptides; NEI and MCH. A third peptide, NGE, may also be produced. Preferential processing in neurons by prohormone convertase 2 (PC2) generates NEI. MCH is generated in neurons of the lateral hypothalmic area by several prohormone convertases including PC1/3, PC2 and PC5/6. In terms of tissue distribution, predominantly expressed in hypothalamus. Also found in heart, intestine, spleen and testis (spermatogonia, early spermatocytes and Sertoli cells). In brain only mature MCH and NEI peptides are present. In peripheral tissues a large product, encompassing the NEI and MCH domains of the precursor, is found predominantly.

Its subcellular location is the secreted. Its function is as follows. MCH may act as a neurotransmitter or neuromodulator in a broad array of neuronal functions directed toward the regulation of goal-directed behavior, such as food intake, and general arousal. The sequence is that of Pro-MCH (Pmch) from Mus musculus (Mouse).